The following is a 462-amino-acid chain: Tissue alpha-L-fucosidase (462 aa).

The first 28 residues, 1-28 (MWDLKSEWWAVGFGLLLLLAASAQAGGL), serve as a signal peptide directing secretion. Residues asparagine 237, asparagine 264, and asparagine 378 are each glycosylated (N-linked (GlcNAc...) asparagine).

Belongs to the glycosyl hydrolase 29 family. Homotetramer.

The protein resides in the lysosome. It catalyses the reaction an alpha-L-fucoside + H2O = L-fucose + an alcohol. It carries out the reaction a neolactoside IV(2)-alpha-Fuc-nLc4Cer(d18:1(4E)) + H2O = a neolactoside nLc4Cer(d18:1(4E)) + L-fucose. The catalysed reaction is a neolactoside IV(2)-alpha-Fuc-nLc4Cer(d18:0) + H2O = a neolactoside nLc4Cer(d18:0) + L-fucose. In terms of biological role, alpha-L-fucosidase is responsible for hydrolyzing the alpha-1,6-linked fucose joined to the reducing-end N-acetylglucosamine of the carbohydrate moieties of glycoproteins. The polypeptide is Tissue alpha-L-fucosidase (Fuca1) (Rattus norvegicus (Rat)).